Here is a 1061-residue protein sequence, read N- to C-terminus: Translation initiation factor IF-2 (1061 aa).

Disordered regions lie at residues 51 to 199 (FARG…VAVK) and 250 to 460 (AFQA…IPTE). Over residues 67 to 77 (NEPKPKIDWSR) the composition is skewed to basic and acidic residues. 5 stretches are compositionally biased toward low complexity: residues 97–113 (VAAARPAAVPVAPKAPV), 120–130 (RPSAPRPAVTA), 167–177 (VPQPRQPSAVV), 184–199 (TPAIAARPPAAPVAVK), and 250–278 (AFQAPAAPAAPAASQSAPQEAKTPAAEAP). Residues 279–291 (PVAPEKPAVPAPP) are compositionally biased toward pro residues. The span at 340–360 (SPGGPGGPGGGYGQRPSGPGG) shows a compositional bias: gly residues. The span at 381-391 (GFNNGPRPGFG) shows a compositional bias: low complexity. The segment covering 392–405 (QRPGGFGQRPGMGA) has biased composition (gly residues). One can recognise a tr-type G domain in the interval 552 to 728 (SRPPVVTVMG…CLVADLGNLK (177 aa)). Positions 561–568 (GHVDHGKT) are G1. 561–568 (GHVDHGKT) is a binding site for GTP. The segment at 586 to 590 (GITQH) is G2. The interval 614-617 (DTPG) is G3. GTP contacts are provided by residues 614–618 (DTPGH) and 668–671 (NKID). A G4 region spans residues 668-671 (NKID). Residues 704–706 (SAK) are G5.

This sequence belongs to the TRAFAC class translation factor GTPase superfamily. Classic translation factor GTPase family. IF-2 subfamily.

The protein localises to the cytoplasm. In terms of biological role, one of the essential components for the initiation of protein synthesis. Protects formylmethionyl-tRNA from spontaneous hydrolysis and promotes its binding to the 30S ribosomal subunits. Also involved in the hydrolysis of GTP during the formation of the 70S ribosomal complex. This is Translation initiation factor IF-2 from Acidobacterium capsulatum (strain ATCC 51196 / DSM 11244 / BCRC 80197 / JCM 7670 / NBRC 15755 / NCIMB 13165 / 161).